Reading from the N-terminus, the 1627-residue chain is MRLWSWVLHLGLLSAALGCGLAERPRRARRDPRAGRPPRPAAGPATCATRAARGRRASPPPPPPPGGAWEAVRVPRRRQQREARGATEEPSPPSRALYFSGRGEQLRLRADLELPRDAFTLQVWLRAEGGQRSPAVITGLYDKCSYISRDRGWVVGIHTISDQDNKDPRYFFSLKTDRARQVTTINAHRSYLPGQWVYLAATYDGQFMKLYVNGAQVATSGEQVGGIFSPLTQKCKVLMLGGSALNHNYRGYIEHFSLWKVARTQREILSDMETHGAHTALPQLLLQENWDNVKHAWSPMKDGSSPKVEFSNAHGFLLDTSLEPPLCGQTLCDNTEVIASYNQLSSFRQPKVVRYRVVNLYEDDHKNPTVTREQVDFQHHQLAEAFKQYNISWELDVLEVSNSSLRRRLILANCDISKIGDENCDPECNHTLTGHDGGDCRHLRHPAFVKKQHNGVCDMDCNYERFNFDGGECCDPEITNVTQTCFDPDSPHRAYLDVNELKNILKLDGSTHLNIFFAKSSEEELAGVATWPWDKEALMHLGGIVLNPSFYGMPGHTHTMIHEIGHSLGLYHVFRGISEIQSCSDPCMETEPSFETGDLCNDTNPAPKHKSCGDPGPGNDTCGFHSFFNTPYNNFMSYADDDCTDSFTPNQVARMHCYLDLVYQGWQPSRKPAPVALAPQVLGHTTDSVTLEWFPPIDGHFFERELGSACHLCLEGRILVQYASNASSPMPCSPSGHWSPREAEGHPDVEQPCKSSVRTWSPNSAVNPHTVPPACPEPQGCYLELEFLYPLVPESLTIWVTFVSTDWDSSGAVNDIKLLAVSGKNISLGPQNVFCDVPLTIRLWDVGEEVYGIQIYTLDEHLEIDAAMLTSTADTPLCLQCKPLKYKVVRDPPLQMDVASILHLNRKFVDMDLNLGSVYQYWVITISGTEESEPSPAVTYIHGSGYCGDGIIQKDQGEQCDDMNKINGDGCSLFCRQEVSFNCIDEPSRCYFHDGDGVCEEFEQKTSIKDCGVYTPQGFLDQWASNASVSHQDQQCPGWVIIGQPAASQVCRTKVIDLSEGISQHAWYPCTISYPYSQLAQTTFWLRAYFSQPMVAAAVIVHLVTDGTYYGDQKQETISVQLLDTKDQSHDLGLHVLSCRNNPLIIPVVHDLSQPFYHSQAVRVSFSSPLVAISGVALRSFDNFDPVTLSSCQRGETYSPAEQSCVHFACEKTDCPELAVENASLNCSSSDRYHGAQCTVSCRTGYVLQIRRDDELIKSQTGPSVTVTCTEGKWNKQVACEPVDCSIPDHHQVYAASFSCPEGTTFGSQCSFQCRHPAQLKGNNSLLTCMEDGLWSFPEALCELMCLAPPPVPNADLQTARCRENKHKVGSFCKYKCKPGYHVPGSSRKSKKRAFKTQCTQDGSWQEGACVPVTCDPPPPKFHGLYQCTNGFQFNSECRIKCEDSDASQGLGSNVIHCRKDGTWNGSFHVCQEMQGQCSVPNELNSNLKLQCPDGYAIGSECATSCLDHNSESIILPMNVTVRDIPHWLNPTRVERVVCTAGLKWYPHPALIHCVKGCEPFMGDNYCDAINNRAFCNYDGGDCCTSTVKTKKVTPFPMSCDLQGDCACRDPQAQEHSRKDLRGYSHG.

The first 22 residues, 1-22, serve as a signal peptide directing secretion; it reads MRLWSWVLHLGLLSAALGCGLA. A propeptide spanning residues 23–81 is cleaved from the precursor; sequence ERPRRARRDPRAGRPPRPAAGPATCATRAARGRRASPPPPPPPGGAWEAVRVPRRRQQR. The disordered stretch occupies residues 23–99; the sequence is ERPRRARRDP…PSPPSRALYF (77 aa). The span at 42-51 shows a compositional bias: low complexity; it reads AGPATCATRA. Disulfide bonds link cysteine 144–cysteine 235, cysteine 327–cysteine 622, cysteine 332–cysteine 657, cysteine 414–cysteine 428, cysteine 424–cysteine 440, cysteine 457–cysteine 473, cysteine 474–cysteine 485, cysteine 583–cysteine 600, cysteine 587–cysteine 612, cysteine 710–cysteine 878, cysteine 713–cysteine 881, cysteine 753–cysteine 835, cysteine 775–cysteine 781, cysteine 947–cysteine 975, cysteine 960–cysteine 971, cysteine 983–cysteine 990, and cysteine 999–cysteine 1011. Residues 272-583 are metalloprotease; it reads METHGAHTAL…FRGISEIQSC (312 aa). Residues asparagine 390 and asparagine 402 are each glycosylated (N-linked (GlcNAc...) asparagine). Asparagine 429 carries N-linked (GlcNAc...) asparagine glycosylation. N-linked (GlcNAc...) asparagine glycosylation occurs at asparagine 480. Position 562 (histidine 562) interacts with Zn(2+). Glutamate 563 is a catalytic residue. Zn(2+) is bound by residues histidine 566 and histidine 572. 3 N-linked (GlcNAc...) asparagine glycosylation sites follow: asparagine 601, asparagine 619, and asparagine 725. The interval 733 to 754 is disordered; it reads SPSGHWSPREAEGHPDVEQPCK. Positions 739 to 751 are enriched in basic and acidic residues; that stretch reads SPREAEGHPDVEQ. Residue asparagine 825 is glycosylated (N-linked (GlcNAc...) asparagine). An N-linked (GlcNAc...) asparagine glycan is attached at asparagine 1026. Intrachain disulfides connect cysteine 1036–cysteine 1070, cysteine 1051–cysteine 1139, cysteine 1192–cysteine 1205, cysteine 1215–cysteine 1269, cysteine 1227–cysteine 1238, cysteine 1242–cysteine 1280, cysteine 1285–cysteine 1329, cysteine 1300–cysteine 1310, cysteine 1314–cysteine 1342, cysteine 1346–cysteine 1399, cysteine 1362–cysteine 1373, cysteine 1377–cysteine 1410, cysteine 1415–cysteine 1458, cysteine 1428–cysteine 1438, cysteine 1442–cysteine 1471, cysteine 1478–cysteine 1539, cysteine 1492–cysteine 1502, cysteine 1506–cysteine 1554, and cysteine 1558–cysteine 1576. Sushi domains are found at residues 1213–1282, 1283–1344, 1345–1412, 1413–1473, and 1476–1556; these read TDCP…ACEP, VDCS…LCEL, MCLA…ACVP, VTCD…VCQE, and GQCS…HCVK. 2 N-linked (GlcNAc...) asparagine glycosylation sites follow: asparagine 1222 and asparagine 1226. N-linked (GlcNAc...) asparagine glycosylation occurs at asparagine 1323. An N-linked (GlcNAc...) asparagine glycan is attached at asparagine 1465. Asparagine 1519 carries an N-linked (GlcNAc...) asparagine glycan.

It belongs to the peptidase M43B family. As to quaternary structure, homodimer; disulfide-linked. In pregnancy serum, predominantly found as a disulfide-linked 2:2 heterotetramer with the proform of PRG2. Requires Zn(2+) as cofactor. In terms of processing, there appear to be no free sulfhydryl groups. As to expression, high levels in placenta and pregnancy serum. In placenta, expressed in X cells in septa and anchoring villi, and in syncytiotrophoblasts in the chorionic villi. Lower levels are found in a variety of other tissues including kidney, myometrium, endometrium, ovaries, breast, prostate, bone marrow, colon, fibroblasts and osteoblasts.

It is found in the secreted. It carries out the reaction Cleavage of the 135-Met-|-Lys-136 bond in insulin-like growth factor binding protein (IGFBP)-4, and the 143-Ser-|-Lys-144 bond in IGFBP-5.. Inhibited by complexation with the proform of PRG2. In terms of biological role, metalloproteinase which specifically cleaves IGFBP-4 and IGFBP-5, resulting in release of bound IGF. Cleavage of IGFBP-4 is dramatically enhanced by the presence of IGF, whereas cleavage of IGFBP-5 is slightly inhibited by the presence of IGF. In Homo sapiens (Human), this protein is Pappalysin-1 (PAPPA).